Consider the following 439-residue polypeptide: Histidine--tRNA ligase (439 aa).

Belongs to the class-II aminoacyl-tRNA synthetase family. Homodimer.

It localises to the cytoplasm. It carries out the reaction tRNA(His) + L-histidine + ATP = L-histidyl-tRNA(His) + AMP + diphosphate + H(+). The chain is Histidine--tRNA ligase from Leptospira borgpetersenii serovar Hardjo-bovis (strain L550).